The sequence spans 686 residues: Translation initiation factor IF-2 (686 aa).

The tract at residues 54-105 is disordered; it reads KPSVADEFEVEEKVVRSKKNSNKKKKKGKGNEDKRQENFAGRQQTQTVETPD. A compositionally biased stretch (basic residues) spans 69 to 81; the sequence is RSKKNSNKKKKKG. One can recognise a tr-type G domain in the interval 188–357; the sequence is ERPAVVTIMG…LLVSEVEEYK (170 aa). The G1 stretch occupies residues 197 to 204; the sequence is GHVDHGKT. GTP is bound at residue 197–204; it reads GHVDHGKT. The interval 222–226 is G2; sequence GITQH. The segment at 243–246 is G3; that stretch reads DTPG. GTP is bound by residues 243-247 and 297-300; these read DTPGH and NKMD. Residues 297–300 form a G4 region; it reads NKMD. Residues 333–335 form a G5 region; sequence SAI.

It belongs to the TRAFAC class translation factor GTPase superfamily. Classic translation factor GTPase family. IF-2 subfamily.

Its subcellular location is the cytoplasm. One of the essential components for the initiation of protein synthesis. Protects formylmethionyl-tRNA from spontaneous hydrolysis and promotes its binding to the 30S ribosomal subunits. Also involved in the hydrolysis of GTP during the formation of the 70S ribosomal complex. The polypeptide is Translation initiation factor IF-2 (Bacillus cereus (strain AH187)).